The sequence spans 205 residues: Protein Rcp (205 aa).

This sequence belongs to the NAD(P)-dependent epimerase/dehydratase family.

The chain is Protein Rcp (rcp) from Vibrio cholerae serotype O1 (strain ATCC 39315 / El Tor Inaba N16961).